The primary structure comprises 335 residues: Legumin type B (335 aa).

2 disordered regions span residues 47 to 87 (PETQ…GNSV) and 102 to 155 (TEED…GRNG). Basic and acidic residues predominate over residues 105–118 (DTAKRLRSPRDKRN). Over residues 135 to 144 (QQEEEEQEEE) the composition is skewed to acidic residues. Residues 167–314 (ENIAQPARAD…AFGLRQRQVT (148 aa)) form the Cupin type-1 domain.

The protein belongs to the 11S seed storage protein (globulins) family. As to quaternary structure, hexamer; each subunit is composed of an acidic and a basic chain derived from a single precursor and linked by a disulfide bond.

This protein found in the seeds of many leguminous and non-leguminous plants is the source of sulfur-containing amino acids in seed meals. In Vicia faba (Broad bean), this protein is Legumin type B (LEB7).